The following is a 222-amino-acid chain: Capsular polysaccharide type 8 biosynthesis protein cap8A (222 aa).

A run of 2 helical transmembrane segments spans residues 20–40 (ILIILPLLFLIISAIVTFFVL) and 172–192 (VVNLIGAFFLGLVVALIYIFF).

The protein belongs to the CpsC/CapA family.

It is found in the cell membrane. In terms of biological role, required for the biosynthesis of type 8 capsular polysaccharide (Cap8/CP8). Might act as the chain-length regulator. The polypeptide is Capsular polysaccharide type 8 biosynthesis protein cap8A (cap8A) (Staphylococcus aureus).